The primary structure comprises 306 residues: Glutaminase (306 aa).

Residues serine 64, asparagine 115, glutamate 159, asparagine 166, tyrosine 190, tyrosine 242, and valine 260 each contribute to the substrate site.

The protein belongs to the glutaminase family. As to quaternary structure, homotetramer.

The catalysed reaction is L-glutamine + H2O = L-glutamate + NH4(+). In Aliivibrio fischeri (strain MJ11) (Vibrio fischeri), this protein is Glutaminase.